We begin with the raw amino-acid sequence, 284 residues long: Polyamine aminopropyltransferase (284 aa).

Residues 2-237 (ELWYTEQHTE…GHWLFGFASK (236 aa)) enclose the PABS domain. S-methyl-5'-thioadenosine is bound at residue Gln31. Residues His62 and Asp86 each coordinate spermidine. Residues Glu106 and 137 to 138 (DG) contribute to the S-methyl-5'-thioadenosine site. The active-site Proton acceptor is the Asp155. A spermidine-binding site is contributed by 155-158 (DSTD). Pro162 serves as a coordination point for S-methyl-5'-thioadenosine.

This sequence belongs to the spermidine/spermine synthase family. As to quaternary structure, homodimer or homotetramer.

The protein localises to the cytoplasm. The catalysed reaction is S-adenosyl 3-(methylsulfanyl)propylamine + putrescine = S-methyl-5'-thioadenosine + spermidine + H(+). The protein operates within amine and polyamine biosynthesis; spermidine biosynthesis; spermidine from putrescine: step 1/1. Catalyzes the irreversible transfer of a propylamine group from the amino donor S-adenosylmethioninamine (decarboxy-AdoMet) to putrescine (1,4-diaminobutane) to yield spermidine. The chain is Polyamine aminopropyltransferase from Clostridium beijerinckii (strain ATCC 51743 / NCIMB 8052) (Clostridium acetobutylicum).